A 22-amino-acid chain; its full sequence is Cysteine protease inhibitor 4 (22 aa).

This sequence belongs to the protease inhibitor I3 (leguminous Kunitz-type inhibitor) family. As to expression, tubers.

The protein localises to the vacuole. In terms of biological role, inhibitor of papain (cysteine protease). Does not inhibit trypsin, chymotrypsin nor elastase (serine proteases). May protect the plant by inhibiting proteases of invading organisms. This chain is Cysteine protease inhibitor 4, found in Solanum tuberosum (Potato).